The sequence spans 138 residues: Putative pre-16S rRNA nuclease (138 aa).

This sequence belongs to the YqgF nuclease family.

It localises to the cytoplasm. Its function is as follows. Could be a nuclease involved in processing of the 5'-end of pre-16S rRNA. This chain is Putative pre-16S rRNA nuclease, found in Cronobacter sakazakii (strain ATCC BAA-894) (Enterobacter sakazakii).